The sequence spans 70 residues: Small ribosomal subunit protein bS21 (70 aa).

The protein belongs to the bacterial ribosomal protein bS21 family.

The chain is Small ribosomal subunit protein bS21 from Polaromonas naphthalenivorans (strain CJ2).